The sequence spans 356 residues: MRRELLLEKIETYKAIMPWYVLDYYQSKLAVPYSFTTLYEYLKEYKRFFDWLMDADLTQAPKIADIDLSTLEHLTKKDLEAFVLYLRERPSLNTYSTKEGLSQTTINRTLSALSSLYKYLTEEVENDQGEPYFYRNVMKKVSTKKKKETLASRAENIKQKLFLGDETLAFLDYVDKEYEQKLSNRAKSSFRKNKERDLAIIALLLASGVRLSEAVNLDLKDVNLNMMIIEVIRKGGKRDSVNVAGFAKGYLESYLAVRQRRYKAEKQDLAFFLTEYRGVPNRMDASSIEKMVGKYSEDFKIRVTPHKLRHTLATRLYDATKSQVLVSHQLGHSSTQVTDLYTHIVNDEQKNALDNL.

The Core-binding (CB) domain occupies 16–121; sequence IMPWYVLDYY…ALSSLYKYLT (106 aa). Residues 169 to 354 form the Tyr recombinase domain; the sequence is AFLDYVDKEY…VNDEQKNALD (186 aa). Catalysis depends on residues arginine 210, lysine 234, histidine 306, arginine 309, and histidine 332. The active-site O-(3'-phospho-DNA)-tyrosine intermediate is tyrosine 341.

It belongs to the 'phage' integrase family. XerS subfamily.

The protein resides in the cytoplasm. Its activity is regulated as follows. FtsK is required for recombination. Its function is as follows. Site-specific tyrosine recombinase, which acts by catalyzing the cutting and rejoining of the recombining DNA molecules. Essential to convert dimers of the bacterial chromosome into monomers to permit their segregation at cell division. This chain is Tyrosine recombinase XerS, found in Streptococcus pyogenes serotype M1.